The following is a 337-amino-acid chain: DNA-directed RNA polymerase subunit alpha (337 aa).

The interval 1–233 is alpha N-terminal domain (alpha-NTD); the sequence is MVREKVTVST…DLFIPFLHME (233 aa). Residues 265–337 are alpha C-terminal domain (alpha-CTD); the sequence is KKIALKSIFI…FVIDLAKNKF (73 aa).

This sequence belongs to the RNA polymerase alpha chain family. In plastids the minimal PEP RNA polymerase catalytic core is composed of four subunits: alpha, beta, beta', and beta''. When a (nuclear-encoded) sigma factor is associated with the core the holoenzyme is formed, which can initiate transcription.

It is found in the plastid. It localises to the chloroplast. It catalyses the reaction RNA(n) + a ribonucleoside 5'-triphosphate = RNA(n+1) + diphosphate. DNA-dependent RNA polymerase catalyzes the transcription of DNA into RNA using the four ribonucleoside triphosphates as substrates. This is DNA-directed RNA polymerase subunit alpha from Nicotiana sylvestris (Wood tobacco).